A 130-amino-acid polypeptide reads, in one-letter code: Protein ApaG (130 aa).

An ApaG domain is found at 3–127; it reads RALTRDIEVT…FSLDSPGLVR (125 aa).

This is Protein ApaG from Sinorhizobium fredii (strain NBRC 101917 / NGR234).